A 525-amino-acid chain; its full sequence is Coronin-2A (525 aa).

WD repeat units follow at residues 24–71, 72–122, 123–170, 171–214, 215–259, 260–305, and 306–342; these read NCYD…TGKL, DPHY…RNLT, AYRK…SVIT, SPMS…AGTV, LQEA…DNLS, VPLM…ADKP, and HLSY…RFYK. Positions 485–524 form a coiled coil; that stretch reads QMFYRQQEEIRRLRELLTQREVQAKQLELEIKNLRMGSEQ.

Belongs to the WD repeat coronin family. In terms of assembly, binds actin. Component of the N-Cor repressor complex, at least composed of NCOR1, NCOR2, HDAC3, TBL1X, TBL1R, CORO2A and GPS2.

The polypeptide is Coronin-2A (CORO2A) (Homo sapiens (Human)).